Consider the following 344-residue polypeptide: Uroporphyrinogen decarboxylase (344 aa).

Residues 23–27 (RQAGR), aspartate 73, tyrosine 149, threonine 204, and histidine 321 each bind substrate.

This sequence belongs to the uroporphyrinogen decarboxylase family. Homodimer.

It localises to the cytoplasm. It catalyses the reaction uroporphyrinogen III + 4 H(+) = coproporphyrinogen III + 4 CO2. Its pathway is porphyrin-containing compound metabolism; protoporphyrin-IX biosynthesis; coproporphyrinogen-III from 5-aminolevulinate: step 4/4. Catalyzes the decarboxylation of four acetate groups of uroporphyrinogen-III to yield coproporphyrinogen-III. This chain is Uroporphyrinogen decarboxylase, found in Francisella philomiragia subsp. philomiragia (strain ATCC 25017 / CCUG 19701 / FSC 153 / O#319-036).